The chain runs to 375 residues: Protein RecA (375 aa).

The tract at residues 1–20 is disordered; that stretch reads MPAEMKSAASGSDPRSSGER. Residue 79–86 participates in ATP binding; the sequence is GPESSGKT.

The protein belongs to the RecA family.

Its subcellular location is the cytoplasm. Functionally, can catalyze the hydrolysis of ATP in the presence of single-stranded DNA, the ATP-dependent uptake of single-stranded DNA by duplex DNA, and the ATP-dependent hybridization of homologous single-stranded DNAs. It interacts with LexA causing its activation and leading to its autocatalytic cleavage. The polypeptide is Protein RecA (Parasynechococcus marenigrum (strain WH8102)).